A 341-amino-acid polypeptide reads, in one-letter code: Protein arginine N-methyltransferase 1 (341 aa).

The SAM-dependent MTase PRMT-type domain occupies 20 to 315 (ADYYFDSYSH…DCAPFDKNQR (296 aa)). S-adenosyl-L-methionine is bound by residues H33, R42, G66, D88, and E117. Active-site residues include E132 and E141.

The protein belongs to the class I-like SAM-binding methyltransferase superfamily. Protein arginine N-methyltransferase family.

Its subcellular location is the nucleus. It localises to the cytoplasm. The protein localises to the cytosol. The enzyme catalyses L-arginyl-[protein] + 2 S-adenosyl-L-methionine = N(omega),N(omega)-dimethyl-L-arginyl-[protein] + 2 S-adenosyl-L-homocysteine + 2 H(+). It catalyses the reaction L-arginyl-[protein] + S-adenosyl-L-methionine = N(omega)-methyl-L-arginyl-[protein] + S-adenosyl-L-homocysteine + H(+). In terms of biological role, arginine methyltransferase that methylates the guanidino nitrogens of arginyl residues present in proteins such as ribonucleoproteins and histones. In Dictyostelium discoideum (Social amoeba), this protein is Protein arginine N-methyltransferase 1 (prmt1).